The chain runs to 480 residues: Flap endonuclease 1 (480 aa).

The interval 1–106 (MGIKGLTKFI…SELEKRGEKR (106 aa)) is N-domain. Mg(2+) is bound at residue aspartate 34. Positions 47 and 72 each coordinate DNA. The Mg(2+) site is built by aspartate 88, glutamate 160, glutamate 162, aspartate 181, and aspartate 183. An I-domain region spans residues 124–266 (EIKKQSGRTV…KTAYNLIKEY (143 aa)). Position 160 (glutamate 160) interacts with DNA. DNA contacts are provided by glycine 244 and aspartate 246. Aspartate 246 serves as a coordination point for Mg(2+). The interaction with PCNA stretch occupies residues 349–357 (TQRRLDTFF). Residues 379–461 (TKGKGKKREI…NIKNENVKED (83 aa)) are disordered. Basic and acidic residues predominate over residues 404-428 (NVKDEKKNNEKVDELKNKSDENLVK). Positions 429–438 (DEEDDQDDYD) are enriched in acidic residues.

This sequence belongs to the XPG/RAD2 endonuclease family. FEN1 subfamily. As to quaternary structure, interacts with PCNA. Three molecules of FEN1 bind to one PCNA trimer with each molecule binding to one PCNA monomer. PCNA stimulates the nuclease activity without altering cleavage specificity. Requires Mg(2+) as cofactor. Phosphorylated. Phosphorylation upon DNA damage induces relocalization to the nuclear plasma.

Its subcellular location is the nucleus. It localises to the nucleolus. The protein localises to the nucleoplasm. It is found in the mitochondrion. Inhibited by monovalent metal ions. Its function is as follows. Structure-specific nuclease with 5'-flap endonuclease and 5'-3' exonuclease activities involved in DNA replication and repair. During DNA replication, cleaves the 5'-overhanging flap structure that is generated by displacement synthesis when DNA polymerase encounters the 5'-end of a downstream Okazaki fragment. It enters the flap from the 5'-end and then tracks to cleave the flap base, leaving a nick for ligation. Also involved in the long patch base excision repair (LP-BER) pathway, by cleaving within the apurinic/apyrimidinic (AP) site-terminated flap. Acts as a genome stabilization factor that prevents flaps from equilibrating into structures that lead to duplications and deletions. Also possesses 5'-3' exonuclease activity on nicked or gapped double-stranded DNA, and exhibits RNase H activity. Also involved in replication and repair of rDNA and in repairing mitochondrial DNA. The chain is Flap endonuclease 1 from Plasmodium yoelii yoelii.